A 373-amino-acid chain; its full sequence is Cystathionine gamma-synthase/O-acetylhomoserine (thiol)-lyase (373 aa).

N6-(pyridoxal phosphate)lysine is present on Lys197.

Belongs to the trans-sulfuration enzymes family. In terms of assembly, homotetramer. The cofactor is pyridoxal 5'-phosphate.

The protein resides in the cytoplasm. It carries out the reaction O-acetyl-L-homoserine + L-cysteine = L,L-cystathionine + acetate + H(+). The enzyme catalyses O-acetyl-L-homoserine + hydrogen sulfide = L-homocysteine + acetate. Its pathway is amino-acid biosynthesis; L-methionine biosynthesis via de novo pathway. Functionally, catalyzes the formation of L-cystathionine from O-acetyl-L-homoserine and L-cysteine. Cannot use O-succinyl-L-homoserine as substrate. Also exhibits O-acetylhomoserine thiolyase activity, catalyzing the synthesis of L-homocysteine from O-acetyl-L-homoserine and sulfide. The protein is Cystathionine gamma-synthase/O-acetylhomoserine (thiol)-lyase (metI) of Bacillus subtilis (strain 168).